Reading from the N-terminus, the 934-residue chain is Phosphoenolpyruvate carboxylase (934 aa).

Residues H161 and K593 contribute to the active site.

The protein belongs to the PEPCase type 1 family. Mg(2+) serves as cofactor.

It catalyses the reaction oxaloacetate + phosphate = phosphoenolpyruvate + hydrogencarbonate. Functionally, forms oxaloacetate, a four-carbon dicarboxylic acid source for the tricarboxylic acid cycle. The protein is Phosphoenolpyruvate carboxylase (ppc) of Mycobacterium leprae (strain TN).